A 464-amino-acid chain; its full sequence is Integrator complex subunit 12 (464 aa).

The segment at 42–98 (GNDSVYRPQPKEVEQPKAMLSKVKPETKASSSTPSSSILSKPLASEKVKKEAEKRTA) is disordered. Residues 69-84 (KASSSTPSSSILSKPL) show a composition bias toward low complexity. Over residues 85–98 (ASEKVKKEAEKRTA) the composition is skewed to basic and acidic residues. The PHD-type zinc finger occupies 156-212 (GLACVVCRQMTVFSGNQLVECQECHNLYHQDCHRPQVTDKDVNDPRLVWYCARCTRQ). 2 disordered regions span residues 216-252 (MAQK…LKSK) and 312-445 (TNSQ…SQLN). The segment covering 227–239 (PAPSAVSAVTPVA) has biased composition (low complexity). A compositionally biased stretch (polar residues) spans 312-329 (TNSQATSGKPPSLSSVQK). Low complexity predominate over residues 339-371 (SKAGSVSKSGSGGSSSTIPLKPLPPLILGKTGL). Positions 372 to 382 (SRSMSSDNVSK) are enriched in polar residues. A compositionally biased stretch (low complexity) spans 384 to 421 (GLPSPNPSSSGSVSSLSSQLGSNNGSSNTAGSNVNSSN). The segment covering 428–445 (SMQQSGAKGPTSQESQLN) has biased composition (polar residues).

The protein belongs to the Integrator subunit 12 family. In terms of assembly, component of the Integrator complex, composed of core subunits INTS1, INTS2, INTS3, INTS4, INTS5, INTS6, INTS7, INTS8, INTS9/RC74, INTS10, INTS11/CPSF3L, INTS12, INTS13, INTS14 and INTS15. The core complex associates with protein phosphatase 2A subunits PPP2CA and PPP2R1A, to form the Integrator-PP2A (INTAC) complex.

Its subcellular location is the nucleus. Functionally, component of the integrator complex, a multiprotein complex that terminates RNA polymerase II (Pol II) transcription in the promoter-proximal region of genes. The integrator complex provides a quality checkpoint during transcription elongation by driving premature transcription termination of transcripts that are unfavorably configured for transcriptional elongation: the complex terminates transcription by (1) catalyzing dephosphorylation of the C-terminal domain (CTD) of Pol II subunit POLR2A/RPB1 and SUPT5H/SPT5, (2) degrading the exiting nascent RNA transcript via endonuclease activity and (3) promoting the release of Pol II from bound DNA. The integrator complex is also involved in terminating the synthesis of non-coding Pol II transcripts, such as enhancer RNAs (eRNAs), small nuclear RNAs (snRNAs), telomerase RNAs and long non-coding RNAs (lncRNAs). The polypeptide is Integrator complex subunit 12 (ints12) (Xenopus laevis (African clawed frog)).